The primary structure comprises 750 residues: MTIRSPEPEVKIAVERDPVKTSFEKWAQPGHFSRTLAKGPSTTTWIWNLHADAHDFDSHTNDLEEISRKVFSAHFGQLAIIFIWLSGMYFHGARFSNHEAWLSDPTHVKPSAQVVWPIVGQEILNGDVGGGFQGIQITSGFFQIWRASGITSELQLYSTAIGGLIFAALMLFAGWFHYHKAAPKLTWFQDVESMLNHHLAGLLGLGSLSWAGHQVHVSLPINQLLDAGVDAKEIPLPHEFILNRDLMTQLYPSFAKGLTPFFTLNWSEYSDFSTFRGGLNPVTGGLWLTDTVHHHLAIAVLFLIAGHMYRTNWGIGHSLKEILEAHKGPFTGEGHKGLYEIFTTSWHAQLALNLAMLGSLTIVVAHHMYSMPPYPYLATDYGTQLSLFTHHMWIGGFLVVGAAAHAAIFMVRDYDPTTQYNNLLDRVLRHRDAIVSHLNWACIFLGFHSFGLYIHNDTMSALGRPQDMFSDTAIQLQPIFAQWVQNTHAVAPFSTAPNAAASTSLTWGGIDLVAVGGKVALLPIPLGTADFLVHHIHAFTIHVTVLILLKGVLFARSSRLIPDKANLGFRFPCDGPGRGGTCQVSAWDHVFLGLFWMYNAISVVIFHFSWKMQSDVWGSVSDQKIVTHITGGNFAQSSITINGWLRDFLWAQASQVIQSHGSSLSAYGLPFLGAHFVWAFSLMFLFSGRGYWQELIESIVWAHNKLKVAPAIQPRALSIVQGRAVGVAHYLLGGIATTWAFFLARIIAVG.

8 helical membrane passes run 70–93 (VFSA…FHGA), 156–179 (LYST…FHYH), 195–219 (LNHH…HVSL), 291–309 (TVHH…GHMY), 346–369 (WHAQ…HHMY), 385–411 (LSLF…IFMV), 433–455 (AIVS…LYIH), and 531–549 (FLVH…LILL). The [4Fe-4S] cluster site is built by C573 and C582. The next 2 helical transmembrane spans lie at 589 to 610 (HVFL…HFSW) and 664 to 686 (LSAY…MFLF). H675 is a binding site for chlorophyll a'. Chlorophyll a-binding residues include M683 and Y691. W692 lines the phylloquinone pocket. A helical transmembrane segment spans residues 724-744 (AVGVAHYLLGGIATTWAFFLA).

Belongs to the PsaA/PsaB family. As to quaternary structure, the PsaA/B heterodimer binds the P700 chlorophyll special pair and subsequent electron acceptors. PSI consists of a core antenna complex that captures photons, and an electron transfer chain that converts photonic excitation into a charge separation. The eukaryotic PSI reaction center is composed of at least 11 subunits. Requires P700 is a chlorophyll a/chlorophyll a' dimer, A0 is one or more chlorophyll a, A1 is one or both phylloquinones and FX is a shared 4Fe-4S iron-sulfur center. as cofactor.

The protein localises to the plastid. It is found in the chloroplast thylakoid membrane. The catalysed reaction is reduced [plastocyanin] + hnu + oxidized [2Fe-2S]-[ferredoxin] = oxidized [plastocyanin] + reduced [2Fe-2S]-[ferredoxin]. Functionally, psaA and PsaB bind P700, the primary electron donor of photosystem I (PSI), as well as the electron acceptors A0, A1 and FX. PSI is a plastocyanin-ferredoxin oxidoreductase, converting photonic excitation into a charge separation, which transfers an electron from the donor P700 chlorophyll pair to the spectroscopically characterized acceptors A0, A1, FX, FA and FB in turn. Oxidized P700 is reduced on the lumenal side of the thylakoid membrane by plastocyanin. The protein is Photosystem I P700 chlorophyll a apoprotein A1 of Huperzia lucidula (Shining clubmoss).